The chain runs to 528 residues: Light-independent protochlorophyllide reductase subunit B (528 aa).

Residue D36 participates in [4Fe-4S] cluster binding. The active-site Proton donor is the D274. 409–410 (GL) serves as a coordination point for substrate. The tract at residues 429–471 (GPSHHGGHAPKPMHDAPAASAAAGAEASMAEETAAPSQDAPAA) is disordered. The segment covering 444 to 465 (APAASAAAGAEASMAEETAAPS) has biased composition (low complexity).

It belongs to the ChlB/BchB/BchZ family. In terms of assembly, protochlorophyllide reductase is composed of three subunits; BchL, BchN and BchB. Forms a heterotetramer of two BchB and two BchN subunits. [4Fe-4S] cluster serves as cofactor.

It catalyses the reaction chlorophyllide a + oxidized 2[4Fe-4S]-[ferredoxin] + 2 ADP + 2 phosphate = protochlorophyllide a + reduced 2[4Fe-4S]-[ferredoxin] + 2 ATP + 2 H2O. It participates in porphyrin-containing compound metabolism; bacteriochlorophyll biosynthesis (light-independent). Component of the dark-operative protochlorophyllide reductase (DPOR) that uses Mg-ATP and reduced ferredoxin to reduce ring D of protochlorophyllide (Pchlide) to form chlorophyllide a (Chlide). This reaction is light-independent. The NB-protein (BchN-BchB) is the catalytic component of the complex. The chain is Light-independent protochlorophyllide reductase subunit B from Dinoroseobacter shibae (strain DSM 16493 / NCIMB 14021 / DFL 12).